The following is a 415-amino-acid chain: Acetyl-CoA acetyltransferase 1 (415 aa).

The active-site Acyl-thioester intermediate is cysteine 99. Lysine 239 provides a ligand contact to CoA. K(+) is bound at residue alanine 256. Serine 260 lines the CoA pocket. Residue valine 357 participates in K(+) binding. Residues histidine 361 and cysteine 391 each act as proton acceptor in the active site.

Belongs to the thiolase-like superfamily. Thiolase family. As to expression, expressed in the vascular system of roots, cotyledons, young leaves, fully expanded leaves, stems, flowers, and funiculi of siliques.

The protein localises to the cytoplasm. The protein resides in the peroxisome. It catalyses the reaction 2 acetyl-CoA = acetoacetyl-CoA + CoA. It participates in metabolic intermediate biosynthesis; (R)-mevalonate biosynthesis; (R)-mevalonate from acetyl-CoA: step 1/3. Its function is as follows. Catalyzes the condensation of two molecules of acetyl-CoA to produce acetoacetyl-CoA. The chain is Acetyl-CoA acetyltransferase 1 from Arabidopsis thaliana (Mouse-ear cress).